A 230-amino-acid chain; its full sequence is MTKTSTCIYHFLVLSWYTFLNYYISQEGKDEVKPKILANGARWKYMTLLNLLLQTIFYGVTCLDDVLKRTKGGKDIKFLTAFRDLLFTTLAFPVSTFVFLAFWILFLYNRDLIYPKVLDTVIPVWLNHAMHTFIFPITLAEVVLRPHSYPSKKTGLTLLAAASIAYISRILWLYFETGTWVYPVFAKLSLLGLAAFFSLSYVFIASIYLLGEKLNHWKWGDMRQPRKKRK.

At 1–3 (MTK) the chain is on the cytoplasmic side. A helical transmembrane segment spans residues 4–24 (TSTCIYHFLVLSWYTFLNYYI). Over 25–46 (SQEGKDEVKPKILANGARWKYM) the chain is Extracellular. The helical transmembrane segment at 47–67 (TLLNLLLQTIFYGVTCLDDVL) threads the bilayer. Over 68-85 (KRTKGGKDIKFLTAFRDL) the chain is Cytoplasmic. The helical transmembrane segment at 86–106 (LFTTLAFPVSTFVFLAFWILF) threads the bilayer. At 107-119 (LYNRDLIYPKVLD) the chain is on the extracellular side. Residues 120–140 (TVIPVWLNHAMHTFIFPITLA) traverse the membrane as a helical segment. Residues 141 to 154 (EVVLRPHSYPSKKT) lie on the Cytoplasmic side of the membrane. A helical transmembrane segment spans residues 155 to 175 (GLTLLAAASIAYISRILWLYF). Residues 176–189 (ETGTWVYPVFAKLS) lie on the Extracellular side of the membrane. A helical transmembrane segment spans residues 190–210 (LLGLAAFFSLSYVFIASIYLL). The Cytoplasmic portion of the chain corresponds to 211 to 230 (GEKLNHWKWGDMRQPRKKRK).

This sequence belongs to the AIG1 family. As to expression, expressed in cultured endothelial cells and in placenta.

The protein localises to the cell membrane. The enzyme catalyses 9-hexadecanoyloxy-octadecanoate + H2O = 9-hydroxy-octadecanoate + hexadecanoate + H(+). The catalysed reaction is 12-hexadecanoyloxy-octadecanoate + H2O = 12-hydroxyoctadecanoate + hexadecanoate + H(+). It carries out the reaction 9-(9Z-hexadecenoyloxy)-octadecanoate + H2O = (9Z)-hexadecenoate + 9-hydroxy-octadecanoate + H(+). It catalyses the reaction 12-(9Z-hexadecenoyloxy)-octadecanoate + H2O = 12-hydroxyoctadecanoate + (9Z)-hexadecenoate + H(+). The enzyme catalyses 13-(9Z-hexadecenoyloxy)-octadecanoate + H2O = 13-hydroxy-octadecanoate + (9Z)-hexadecenoate + H(+). The catalysed reaction is 9-octadecanoyloxy-octadecanoate + H2O = 9-hydroxy-octadecanoate + octadecanoate + H(+). It carries out the reaction 12-octadecanoyloxy-octadecanoate + H2O = 12-hydroxyoctadecanoate + octadecanoate + H(+). It catalyses the reaction 13-octadecanoyloxy-octadecanoate + H2O = 13-hydroxy-octadecanoate + octadecanoate + H(+). The enzyme catalyses 9-(9Z-octadecenoyloxy)-octadecanoate + H2O = 9-hydroxy-octadecanoate + (9Z)-octadecenoate + H(+). The catalysed reaction is 12-(9Z-octadecenoyloxy)-octadecanoate + H2O = 12-hydroxyoctadecanoate + (9Z)-octadecenoate + H(+). It carries out the reaction 13-(9Z-octadecenoyloxy)-octadecanoate + H2O = 13-hydroxy-octadecanoate + (9Z)-octadecenoate + H(+). It catalyses the reaction 5-(9Z-octadecenoyloxy)-octadecanoate + H2O = 5-hydroxy-octadecanoate + (9Z)-octadecenoate + H(+). With respect to regulation, inhibited by N-hydroxyhydantoin carbamate JJH260 and beta-lactone KC01. Functionally, hydrolyzes bioactive fatty-acid esters of hydroxy-fatty acids (FAHFAs), but not other major classes of lipids. Show a preference for FAHFAs with branching distal from the carboxylate head group of the lipids. Regulates the expression and the cell-associated anticoagulant activity of the inhibitor TFPI in endothelial cells (in vitro). In Homo sapiens (Human), this protein is Androgen-dependent TFPI-regulating protein (ADTRP).